Consider the following 453-residue polypeptide: Protein LOW PSII ACCUMULATION 1, chloroplastic (453 aa).

The N-terminal 92 residues, 1-92 (MAVATAPSLN…LDLFKRGRVK (92 aa)), are a transit peptide targeting the chloroplast. TPR repeat units follow at residues 75–108 (AELC…APNP) and 112–145 (QAAY…YNLK). 2 helical membrane-spanning segments follow: residues 202-222 (FFYF…VPRL) and 238-258 (TTGN…LFLW).

In terms of assembly, interacts with psbA, but not with psbD, petB, ALB3, LPA2 or LPA3. Is not a component of the PSII complex.

The protein localises to the plastid. Its subcellular location is the chloroplast thylakoid membrane. In terms of biological role, chaperone required for efficient photosystem II (PSII) assembly. Binds to psbA during de novo biogenesis of PSII. The chain is Protein LOW PSII ACCUMULATION 1, chloroplastic (LPA1) from Arabidopsis thaliana (Mouse-ear cress).